A 186-amino-acid polypeptide reads, in one-letter code: Elongation factor P (186 aa).

Belongs to the elongation factor P family.

Its subcellular location is the cytoplasm. Its pathway is protein biosynthesis; polypeptide chain elongation. In terms of biological role, involved in peptide bond synthesis. Stimulates efficient translation and peptide-bond synthesis on native or reconstituted 70S ribosomes in vitro. Probably functions indirectly by altering the affinity of the ribosome for aminoacyl-tRNA, thus increasing their reactivity as acceptors for peptidyl transferase. The protein is Elongation factor P of Streptococcus mutans serotype c (strain ATCC 700610 / UA159).